The following is a 402-amino-acid chain: 4-hydroxy-3-methylbut-2-enyl diphosphate reductase (402 aa).

C66 serves as a coordination point for [4Fe-4S] cluster. Residue H96 coordinates (2E)-4-hydroxy-3-methylbut-2-enyl diphosphate. Position 96 (H96) interacts with dimethylallyl diphosphate. H96 contacts isopentenyl diphosphate. C157 contributes to the [4Fe-4S] cluster binding site. H185 lines the (2E)-4-hydroxy-3-methylbut-2-enyl diphosphate pocket. H185 serves as a coordination point for dimethylallyl diphosphate. Residue H185 coordinates isopentenyl diphosphate. The active-site Proton donor is E187. T250 provides a ligand contact to (2E)-4-hydroxy-3-methylbut-2-enyl diphosphate. C288 is a binding site for [4Fe-4S] cluster. (2E)-4-hydroxy-3-methylbut-2-enyl diphosphate-binding residues include S317, S318, N319, and S379. Dimethylallyl diphosphate-binding residues include S317, S318, N319, and S379. S317, S318, N319, and S379 together coordinate isopentenyl diphosphate.

Belongs to the IspH family. The cofactor is [4Fe-4S] cluster.

It carries out the reaction isopentenyl diphosphate + 2 oxidized [2Fe-2S]-[ferredoxin] + H2O = (2E)-4-hydroxy-3-methylbut-2-enyl diphosphate + 2 reduced [2Fe-2S]-[ferredoxin] + 2 H(+). It catalyses the reaction dimethylallyl diphosphate + 2 oxidized [2Fe-2S]-[ferredoxin] + H2O = (2E)-4-hydroxy-3-methylbut-2-enyl diphosphate + 2 reduced [2Fe-2S]-[ferredoxin] + 2 H(+). It functions in the pathway isoprenoid biosynthesis; dimethylallyl diphosphate biosynthesis; dimethylallyl diphosphate from (2E)-4-hydroxy-3-methylbutenyl diphosphate: step 1/1. Its pathway is isoprenoid biosynthesis; isopentenyl diphosphate biosynthesis via DXP pathway; isopentenyl diphosphate from 1-deoxy-D-xylulose 5-phosphate: step 6/6. In terms of biological role, catalyzes the conversion of 1-hydroxy-2-methyl-2-(E)-butenyl 4-diphosphate (HMBPP) into a mixture of isopentenyl diphosphate (IPP) and dimethylallyl diphosphate (DMAPP). Acts in the terminal step of the DOXP/MEP pathway for isoprenoid precursor biosynthesis. The protein is 4-hydroxy-3-methylbut-2-enyl diphosphate reductase of Trichormus variabilis (strain ATCC 29413 / PCC 7937) (Anabaena variabilis).